The primary structure comprises 243 residues: UPF0758 protein Ava_0172 (243 aa).

One can recognise an MPN domain in the interval 113–235; the sequence is PIDSPVAAVA…HQSLREVTTL (123 aa). The Zn(2+) site is built by H184, H186, and D197. The JAMM motif signature appears at 184 to 197; that stretch reads HNHPSGNVEPSPED.

Belongs to the UPF0758 family.

The sequence is that of UPF0758 protein Ava_0172 from Trichormus variabilis (strain ATCC 29413 / PCC 7937) (Anabaena variabilis).